Here is a 178-residue protein sequence, read N- to C-terminus: Peptide deformylase 2 (178 aa).

Residues Cys101 and His143 each contribute to the Fe cation site. Glu144 is a catalytic residue. Residue His147 participates in Fe cation binding.

Belongs to the polypeptide deformylase family. The cofactor is Fe(2+).

It carries out the reaction N-terminal N-formyl-L-methionyl-[peptide] + H2O = N-terminal L-methionyl-[peptide] + formate. Removes the formyl group from the N-terminal Met of newly synthesized proteins. Requires at least a dipeptide for an efficient rate of reaction. N-terminal L-methionine is a prerequisite for activity but the enzyme has broad specificity at other positions. In Pseudomonas putida (strain ATCC 47054 / DSM 6125 / CFBP 8728 / NCIMB 11950 / KT2440), this protein is Peptide deformylase 2.